A 148-amino-acid polypeptide reads, in one-letter code: uncharacterized protein (148 aa).

A compositionally biased stretch (polar residues) spans 1–11 (MKPRNINNSLP). Residues 1–31 (MKPRNINNSLPLQPLVPDQENKNKKNEEKSV) form a disordered region. A compositionally biased stretch (basic and acidic residues) spans 19-30 (QENKNKKNEEKS).

This is an uncharacterized protein from Escherichia coli (strain K12).